The primary structure comprises 325 residues: Small ribosomal subunit protein uS4m (325 aa).

Residues 146-209 form the S4 RNA-binding domain; sequence KRIDMILLRS…HKQNLIHRLK (64 aa).

It belongs to the universal ribosomal protein uS4 family.

The protein resides in the mitochondrion. The polypeptide is Small ribosomal subunit protein uS4m (mrps4) (Dictyostelium citrinum (Slime mold)).